Reading from the N-terminus, the 387-residue chain is Penicillopepsin-1 (387 aa).

The first 19 residues, 1 to 19 (MVNSKTVVSALALSALAAA), serve as a signal peptide directing secretion. A propeptide spans 20–66 (APAPSSTTSFSINQVAVKKPAIHPAVKYAKALAKYHAEIPSNVASAA) (activation peptide). One can recognise a Peptidase A1 domain in the interval 85 to 384 (YVTPITAGSS…DGDNLQLGFA (300 aa)). Active-site residues include D101 and D279. N304 carries N-linked (GlcNAc...) asparagine glycosylation. A disulfide bridge connects residues C315 and C347.

Belongs to the peptidase A1 family. As to quaternary structure, monomer.

It localises to the secreted. It catalyses the reaction Hydrolysis of proteins with broad specificity similar to that of pepsin A, preferring hydrophobic residues at P1 and P1', but also cleaving 20-Gly-|-Glu-21 in the B chain of insulin. Clots milk, and activates trypsinogen.. Its function is as follows. Secreted aspartic endopeptidase that allows assimilation of proteinaceous substrates. The scissile peptide bond is attacked by a nucleophilic water molecule activated by two aspartic residues in the active site. Shows a broad primary substrate specificity. Favors hydrophobic residues at the P1 and P1' positions, but can also activate trypsinogen and hydrolyze the B chain of insulin between positions 'Gly-20' and 'Glu-21'. In Talaromyces stipitatus (strain ATCC 10500 / CBS 375.48 / QM 6759 / NRRL 1006) (Penicillium stipitatum), this protein is Penicillopepsin-1 (pepA).